Reading from the N-terminus, the 339-residue chain is Ketol-acid reductoisomerase (NADP(+)) (339 aa).

The KARI N-terminal Rossmann domain occupies 1 to 182; it reads MRVYYDRDAD…GGGRAGIIET (182 aa). NADP(+)-binding positions include 24–27, Arg48, Ser51, Thr53, and 83–86; these read YGSQ and DELQ. His108 is an active-site residue. Gly134 lines the NADP(+) pocket. Positions 183–328 constitute a KARI C-terminal knotted domain; sequence TFREECETDL…AKLREMMPWI (146 aa). 4 residues coordinate Mg(2+): Asp191, Glu195, Glu227, and Glu231. Residue Ser252 coordinates substrate.

It belongs to the ketol-acid reductoisomerase family. Mg(2+) is required as a cofactor.

The enzyme catalyses (2R)-2,3-dihydroxy-3-methylbutanoate + NADP(+) = (2S)-2-acetolactate + NADPH + H(+). The catalysed reaction is (2R,3R)-2,3-dihydroxy-3-methylpentanoate + NADP(+) = (S)-2-ethyl-2-hydroxy-3-oxobutanoate + NADPH + H(+). It functions in the pathway amino-acid biosynthesis; L-isoleucine biosynthesis; L-isoleucine from 2-oxobutanoate: step 2/4. The protein operates within amino-acid biosynthesis; L-valine biosynthesis; L-valine from pyruvate: step 2/4. In terms of biological role, involved in the biosynthesis of branched-chain amino acids (BCAA). Catalyzes an alkyl-migration followed by a ketol-acid reduction of (S)-2-acetolactate (S2AL) to yield (R)-2,3-dihydroxy-isovalerate. In the isomerase reaction, S2AL is rearranged via a Mg-dependent methyl migration to produce 3-hydroxy-3-methyl-2-ketobutyrate (HMKB). In the reductase reaction, this 2-ketoacid undergoes a metal-dependent reduction by NADPH to yield (R)-2,3-dihydroxy-isovalerate. The sequence is that of Ketol-acid reductoisomerase (NADP(+)) from Rhodopseudomonas palustris (strain BisA53).